Reading from the N-terminus, the 193-residue chain is Ion-translocating oxidoreductase complex subunit A (193 aa).

Helical transmembrane passes span 5–25, 39–59, 62–82, 102–122, 134–154, and 171–191; these read ALLF…FLGL, IGMG…SWLI, FILV…LVLA, LLGI…VVLL, TIYG…FAAI, and SIAL…TGLV.

Belongs to the NqrDE/RnfAE family. The complex is composed of six subunits: RnfA, RnfB, RnfC, RnfD, RnfE and RnfG.

It is found in the cell inner membrane. Its function is as follows. Part of a membrane-bound complex that couples electron transfer with translocation of ions across the membrane. This chain is Ion-translocating oxidoreductase complex subunit A, found in Pectobacterium atrosepticum (strain SCRI 1043 / ATCC BAA-672) (Erwinia carotovora subsp. atroseptica).